The chain runs to 561 residues: Putative transport protein YbjL (561 aa).

Helical transmembrane passes span 8 to 28 (LLNGNYILLLFVVLALGLCLG), 32 to 52 (LGSIQLGNSIGVLVVSLLLGQ), 66 to 86 (FMLFIFCVGVEAGPNFFSIFF), 94 to 114 (MLALVMVGSALVIALGLGKLF), and 158 to 178 (NLSLGYALTYLIGLVSLIVGA). 2 consecutive RCK C-terminal domains span residues 200 to 288 (RGLD…SFRN) and 292 to 373 (VFDR…RIGF). Helical transmembrane passes span 383–403 (LLAFCAFFVIGLMIGMITFQF), 406–426 (FSFGMGNAAGLLFAGIMLGFM), 451–471 (VFMAGVGLSAGSGINNGLGAI), 475–495 (MLIAGLIVSLVPVVICFLFGA), and 540–560 (AIANVLLTLAGTIIVMVWPGL).

This sequence belongs to the AAE transporter (TC 2.A.81) family. YbjL subfamily.

It is found in the cell membrane. The sequence is that of Putative transport protein YbjL from Escherichia coli O127:H6 (strain E2348/69 / EPEC).